The primary structure comprises 537 residues: Putative cysteine ligase BshC (537 aa).

The stretch at 415–439 (EKASNNFINEVEEMKIQQQELYNNL) forms a coiled coil.

It belongs to the BshC family.

Involved in bacillithiol (BSH) biosynthesis. May catalyze the last step of the pathway, the addition of cysteine to glucosamine malate (GlcN-Mal) to generate BSH. This chain is Putative cysteine ligase BshC, found in Staphylococcus epidermidis (strain ATCC 12228 / FDA PCI 1200).